The sequence spans 334 residues: Holliday junction branch migration complex subunit RuvB (334 aa).

A large ATPase domain (RuvB-L) region spans residues 4 to 186; sequence ADRLIAPISN…FGIVQRLEYY (183 aa). ATP is bound by residues Ile25, Arg26, Gly67, Lys70, Thr71, Thr72, 133-135, Arg176, Tyr186, and Arg223; that span reads EDY. Residue Thr71 participates in Mg(2+) binding. Residues 187 to 257 are small ATPAse domain (RuvB-S); the sequence is KVADLQHIVQ…TADRALNMLD (71 aa). Residues 260–334 form a head domain (RuvB-H) region; sequence HQGFDYMDRK…RAYLHFGIEK (75 aa). Arg315 and Arg320 together coordinate DNA.

This sequence belongs to the RuvB family. Homohexamer. Forms an RuvA(8)-RuvB(12)-Holliday junction (HJ) complex. HJ DNA is sandwiched between 2 RuvA tetramers; dsDNA enters through RuvA and exits via RuvB. An RuvB hexamer assembles on each DNA strand where it exits the tetramer. Each RuvB hexamer is contacted by two RuvA subunits (via domain III) on 2 adjacent RuvB subunits; this complex drives branch migration. In the full resolvosome a probable DNA-RuvA(4)-RuvB(12)-RuvC(2) complex forms which resolves the HJ.

It localises to the cytoplasm. It carries out the reaction ATP + H2O = ADP + phosphate + H(+). Its function is as follows. The RuvA-RuvB-RuvC complex processes Holliday junction (HJ) DNA during genetic recombination and DNA repair, while the RuvA-RuvB complex plays an important role in the rescue of blocked DNA replication forks via replication fork reversal (RFR). RuvA specifically binds to HJ cruciform DNA, conferring on it an open structure. The RuvB hexamer acts as an ATP-dependent pump, pulling dsDNA into and through the RuvAB complex. RuvB forms 2 homohexamers on either side of HJ DNA bound by 1 or 2 RuvA tetramers; 4 subunits per hexamer contact DNA at a time. Coordinated motions by a converter formed by DNA-disengaged RuvB subunits stimulates ATP hydrolysis and nucleotide exchange. Immobilization of the converter enables RuvB to convert the ATP-contained energy into a lever motion, pulling 2 nucleotides of DNA out of the RuvA tetramer per ATP hydrolyzed, thus driving DNA branch migration. The RuvB motors rotate together with the DNA substrate, which together with the progressing nucleotide cycle form the mechanistic basis for DNA recombination by continuous HJ branch migration. Branch migration allows RuvC to scan DNA until it finds its consensus sequence, where it cleaves and resolves cruciform DNA. This is Holliday junction branch migration complex subunit RuvB from Vibrio cholerae serotype O1 (strain ATCC 39315 / El Tor Inaba N16961).